Here is a 1258-residue protein sequence, read N- to C-terminus: Plasma membrane calcium-transporting ATPase 3 (1258 aa).

The span at 1–19 (MGDMANSSIEFHPKPQQQR) shows a compositional bias: polar residues. The tract at residues 1 to 22 (MGDMANSSIEFHPKPQQQREVP) is disordered. Residues 1–97 (MGDMANSSIE…NFIPPKQPKT (97 aa)) are Cytoplasmic-facing. Residue S8 is modified to Phosphoserine. The helical transmembrane segment at 98–118 (FLQLVWEALQDVTLIILEVAA) threads the bilayer. Residues 119-155 (IVSLGLSFYAPPGEESEACGNVSGGAEDEGEAEAGWI) lie on the Extracellular side of the membrane. A helical membrane pass occupies residues 156–176 (EGAAILLSVICVVLVTAFNDW). At 177–364 (SKEKQFRGLQ…KEKSVLQGKL (188 aa)) the chain is on the cytoplasmic side. Disordered regions lie at residues 298-328 (EEEKKDKKGKQQDGAMESSQTKAKKQDGAVA) and 335-354 (KSAEGGEMEEREKKKANVPK). Composition is skewed to basic and acidic residues over residues 299 to 308 (EEKKDKKGKQ) and 342 to 354 (MEEREKKKANVPK). A helical membrane pass occupies residues 365–384 (TKLAVQIGKAGLVMSAITVI). Topologically, residues 385 to 417 (ILVLYFVIETFVVDGRVWLAECTPVYVQYFVKF) are extracellular. The chain crosses the membrane as a helical span at residues 418–435 (FIIGVTVLVVAVPEGLPL). Residues 436–849 (AVTISLAYSV…MWGRNVYDSI (414 aa)) lie on the Cytoplasmic side of the membrane. D473 (4-aspartylphosphate intermediate) is an active-site residue. Mg(2+) contacts are provided by D794 and D798. Residues 850 to 869 (SKFLQFQLTVNVVAVIVAFT) form a helical membrane-spanning segment. At 870–879 (GACITQDSPL) the chain is on the extracellular side. The chain crosses the membrane as a helical span at residues 880–900 (KAVQMLWVNLIMDTFASLALA). At 901-920 (TEPPTESLLLRKPYGRDKPL) the chain is on the cytoplasmic side. The helical transmembrane segment at 921–943 (ISRTMMKNILGHAVYQLTIIFTL) threads the bilayer. The Extracellular segment spans residues 944 to 961 (LFVGELFFDIDSGRNAPL). A helical transmembrane segment spans residues 962–983 (HSPPSEHYTIIFNTFVMMQLFN). Topologically, residues 984 to 1002 (EINARKIHGERNVFDGIFS) are cytoplasmic. The chain crosses the membrane as a helical span at residues 1003 to 1024 (NPIFCTIVLGTFGIQIVIVQFG). The Extracellular portion of the chain corresponds to 1025–1034 (GKPFSCSPLS). Residues 1035 to 1056 (TEQWLWCLFVGVGELVWGQVIA) traverse the membrane as a helical segment. Over 1057–1258 (TIPTSQLKCL…SPLHSMETSL (202 aa)) the chain is Cytoplasmic. T1079 is subject to Phosphothreonine. The interval 1097–1114 (LRRGQILWFRGLNRIQTQ) is calmodulin-binding subdomain A. At T1113 the chain carries Phosphothreonine; by PKC. Positions 1115-1124 (MEVVSTFKRS) are calmodulin-binding subdomain B. Phosphoserine is present on S1126. A disordered region spans residues 1204–1258 (ENEERLRAPPPPPPNQNNNAIDSGIYLTTHATKSATSSAFSSRPGSPLHSMETSL). Over residues 1231-1245 (TTHATKSATSSAFSS) the composition is skewed to low complexity.

This sequence belongs to the cation transport ATPase (P-type) (TC 3.A.3) family. Type IIB subfamily. As to quaternary structure, interacts with PDZD11. Interacts (via N-terminus) with YWHAE. In terms of tissue distribution, expressed predominantly in brain and skeletal muscle. Expressed in the molecular layer of the cerebellar cortex, in particular in granule cells (at protein level). Expressed in aldosterone producing glomerulosa cells of adrenal glands (at protein level). Detected at low levels in various tissues including testis, stomach, small intestine, and large intestine. Most abundant form in brain and most other tissues. As to expression, most abundant form in skeletal muscle and is also found in brain and at low levels in testis and kidney.

The protein localises to the cell membrane. The protein resides in the presynaptic cell membrane. It carries out the reaction Ca(2+)(in) + ATP + H2O = Ca(2+)(out) + ADP + phosphate + H(+). In terms of biological role, ATP-driven Ca(2+) ion pump involved in the maintenance of basal intracellular Ca(2+) levels at the presynaptic terminals. Uses ATP as an energy source to transport cytosolic Ca(2+) ions across the plasma membrane to the extracellular compartment. May counter-transport protons, but the mechanism and the stoichiometry of this Ca(2+)/H(+) exchange remains to be established. The sequence is that of Plasma membrane calcium-transporting ATPase 3 (Atp2b3) from Rattus norvegicus (Rat).